We begin with the raw amino-acid sequence, 88 residues long: Cell division topological specificity factor (88 aa).

This sequence belongs to the MinE family.

Functionally, prevents the cell division inhibition by proteins MinC and MinD at internal division sites while permitting inhibition at polar sites. This ensures cell division at the proper site by restricting the formation of a division septum at the midpoint of the long axis of the cell. In Paracidovorax citrulli (strain AAC00-1) (Acidovorax citrulli), this protein is Cell division topological specificity factor.